A 49-amino-acid chain; its full sequence is Small, acid-soluble spore protein O (49 aa).

Residues alanine 23–glutamine 49 form a disordered region.

This sequence belongs to the SspO family.

The protein resides in the spore core. The chain is Small, acid-soluble spore protein O from Geobacillus thermodenitrificans (strain NG80-2).